Consider the following 427-residue polypeptide: Glutamate-1-semialdehyde 2,1-aminomutase (427 aa).

Position 267 is an N6-(pyridoxal phosphate)lysine (lysine 267).

This sequence belongs to the class-III pyridoxal-phosphate-dependent aminotransferase family. HemL subfamily. Homodimer. It depends on pyridoxal 5'-phosphate as a cofactor.

It localises to the cytoplasm. The enzyme catalyses (S)-4-amino-5-oxopentanoate = 5-aminolevulinate. It functions in the pathway porphyrin-containing compound metabolism; protoporphyrin-IX biosynthesis; 5-aminolevulinate from L-glutamyl-tRNA(Glu): step 2/2. The protein is Glutamate-1-semialdehyde 2,1-aminomutase of Desulfosudis oleivorans (strain DSM 6200 / JCM 39069 / Hxd3) (Desulfococcus oleovorans).